The following is a 131-amino-acid chain: Small ribosomal subunit protein uS8 (131 aa).

It belongs to the universal ribosomal protein uS8 family. As to quaternary structure, part of the 30S ribosomal subunit. Contacts proteins S5 and S12.

One of the primary rRNA binding proteins, it binds directly to 16S rRNA central domain where it helps coordinate assembly of the platform of the 30S subunit. The protein is Small ribosomal subunit protein uS8 of Nitrosospira multiformis (strain ATCC 25196 / NCIMB 11849 / C 71).